The primary structure comprises 620 residues: Translation initiation factor IF-2 (620 aa).

In terms of domain architecture, tr-type G spans 119-288; that stretch reads ERPPIVTIMG…IILISELENL (170 aa). The segment at 128-135 is G1; the sequence is GHVDHGKT. 128–135 lines the GTP pocket; it reads GHVDHGKT. Residues 153–157 are G2; that stretch reads GITQA. Residues 175–178 form a G3 region; sequence DTPG. GTP is bound by residues 175-179 and 229-232; these read DTPGH and NKID. The segment at 229-232 is G4; that stretch reads NKID. The tract at residues 265 to 267 is G5; the sequence is SAI.

This sequence belongs to the TRAFAC class translation factor GTPase superfamily. Classic translation factor GTPase family. IF-2 subfamily.

Its subcellular location is the cytoplasm. In terms of biological role, one of the essential components for the initiation of protein synthesis. Protects formylmethionyl-tRNA from spontaneous hydrolysis and promotes its binding to the 30S ribosomal subunits. Also involved in the hydrolysis of GTP during the formation of the 70S ribosomal complex. The polypeptide is Translation initiation factor IF-2 (Mycoplasma mycoides subsp. mycoides SC (strain CCUG 32753 / NCTC 10114 / PG1)).